The primary structure comprises 237 residues: H/ACA ribonucleoprotein complex subunit 1 (237 aa).

Gly residues-rich tracts occupy residues 1–59 and 172–237; these read MGFG…GGRG and RGGG…RGRW. 2 disordered regions span residues 1-64 and 157-237; these read MGFG…FDTG and KPPQ…RGRW. RGG-box stretches follow at residues 4–56 and 166–236; these read GKPR…GRGG and KAFT…GRGR.

The protein belongs to the GAR1 family. Component of the box H/ACA small nucleolar ribonucleoprotein (H/ACA snoRNP) complex consisting of Nop60B, Gar1, NPH2 and Nop10, and associated with H/ACA-type snoRNAs.

The protein resides in the nucleus. Its subcellular location is the nucleolus. Functionally, component of the box H/ACA small nucleolar ribonucleoprotein (H/ACA snoRNP) complex, which catalyzes pseudouridylation of rRNA. This involves the isomerization of uridine such that the ribose is subsequently attached to C5, instead of the normal N1. Pseudouridine ('psi') residues may serve to stabilize the conformation of rRNAs. Required for ribosome biogenesis. H/ACA snoRNP complex-dependent ribosome biogenesis is important in female germline cell differentiation during oogenesis. The protein is H/ACA ribonucleoprotein complex subunit 1 of Drosophila melanogaster (Fruit fly).